The following is a 297-amino-acid chain: MPLISDLLALCKLKVVALILFTAVVGMFLAVPAPYLPNGLLVLSASIGISMVAASAAVFNHVVDEQIDAQMSRTNQRPLPQGRVSKNQALVWGVFLGFIGLGILQLFVNIITVVLTFISLIGYTIVYTLYLKRATPQNIVIGGAAGATPPVLGWTAVSGTQGIEYACLLFLIVFIWTPPHFWALAIYRVEEYKKIDMPMLPVTHGLAYTRTQILLYTVLLLLVSLLPYLSGMSGLIYLVITIALGVRFLVYAIKIYNNPDDKMVAWSTFMYSINYLMLLFIALLFDHYWLISPWEIL.

8 consecutive transmembrane segments (helical) span residues 15-35, 39-59, 91-111, 112-132, 139-159, 166-186, 220-240, and 265-285; these read VVALILFTAVVGMFLAVPAPY, GLLVLSASIGISMVAASAAVF, VWGVFLGFIGLGILQLFVNII, TVVLTFISLIGYTIVYTLYLK, IVIGGAAGATPPVLGWTAVSG, ACLLFLIVFIWTPPHFWALAI, LLLVSLLPYLSGMSGLIYLVI, and AWSTFMYSINYLMLLFIALLF.

Belongs to the UbiA prenyltransferase family. Protoheme IX farnesyltransferase subfamily.

The protein resides in the cell inner membrane. It catalyses the reaction heme b + (2E,6E)-farnesyl diphosphate + H2O = Fe(II)-heme o + diphosphate. Its pathway is porphyrin-containing compound metabolism; heme O biosynthesis; heme O from protoheme: step 1/1. In terms of biological role, converts heme B (protoheme IX) to heme O by substitution of the vinyl group on carbon 2 of heme B porphyrin ring with a hydroxyethyl farnesyl side group. The polypeptide is Protoheme IX farnesyltransferase (Vesicomyosocius okutanii subsp. Calyptogena okutanii (strain HA)).